A 955-amino-acid polypeptide reads, in one-letter code: GPI inositol-deacylase B (955 aa).

A glycan (N-linked (GlcNAc...) asparagine) is linked at asparagine 7. The chain crosses the membrane as a helical span at residues 8-28; that stretch reads ASVALWTVFTILTIWISFALH. Residue serine 180 is part of the active site. Asparagine 431 carries N-linked (GlcNAc...) asparagine glycosylation. 4 helical membrane-spanning segments follow: residues 489-509, 600-620, 643-663, and 703-723; these read IAFPALTSGLISYKVLTSGGV, LLFSLPTAVLYAVLLLQFWRY, YLSWACLVVAGLSFVIKFEFI, and PIGVVLAPAFLALATGIVVVV. Residue asparagine 753 is glycosylated (N-linked (GlcNAc...) asparagine). The next 3 helical transmembrane spans lie at 772 to 792, 840 to 860, and 870 to 890; these read VIIALMALLVLLFVPYQLAFA, TMSVVMVWTTLVNIPVLAVWV, and IFSSHHNLLSVLPTLLFIENL. Residue asparagine 914 is glycosylated (N-linked (GlcNAc...) asparagine). The helical transmembrane segment at 919 to 939 threads the bilayer; that stretch reads GMMHAFMIHHWFNLLAGWLLI. Asparagine 945 carries N-linked (GlcNAc...) asparagine glycosylation.

This sequence belongs to the GPI inositol-deacylase family.

It localises to the endoplasmic reticulum membrane. Functionally, involved in inositol deacylation of GPI-anchored proteins which plays important roles in the quality control and ER-associated degradation of GPI-anchored proteins. The protein is GPI inositol-deacylase B (BST1B) of Yarrowia lipolytica (strain CLIB 122 / E 150) (Yeast).